A 134-amino-acid polypeptide reads, in one-letter code: MSWQAYVDDHLMCDIEGHEGHRLTAAAIVGQDGSVWAQSATFPQFKPEEMNGIMTDFNEPGHLAPTGLHLGGTKYMVIQGEAGAVIRGKKGSGGITSKKTGQALVCGIYEEPVTPGQCNMVVERLGDYLLEQGL.

Cysteine 13 and cysteine 118 are joined by a disulfide. An Involved in PIP2 interaction motif is present at residues alanine 84 to threonine 100. Residue threonine 114 is modified to Phosphothreonine.

The protein belongs to the profilin family. As to quaternary structure, occurs in many kinds of cells as a complex with monomeric actin in a 1:1 ratio. Phosphorylated by MAP kinases.

Its subcellular location is the cytoplasm. It localises to the cytoskeleton. Functionally, binds to actin and affects the structure of the cytoskeleton. At high concentrations, profilin prevents the polymerization of actin, whereas it enhances it at low concentrations. The protein is Profilin-3 of Olea europaea (Common olive).